The chain runs to 73 residues: Kappa-scoloptoxin(03)-Ssm1c (73 aa).

The first 23 residues, 1-23 (MKSWMAILLVMALIIFTLDNCYS), serve as a signal peptide directing secretion. 3 disulfide bridges follow: cysteine 32–cysteine 58, cysteine 41–cysteine 57, and cysteine 44–cysteine 67.

This sequence belongs to the scoloptoxin family. As to expression, expressed by the venom gland.

It localises to the secreted. Inhibits voltage-gated potassium channels. In Scolopendra mutilans (Chinese red-headed centipede), this protein is Kappa-scoloptoxin(03)-Ssm1c.